A 152-amino-acid polypeptide reads, in one-letter code: Transcriptional repressor NrdR (152 aa).

A zinc finger spans residues 3 to 34 (CPSCQHNGTRVLDSRPVDDGKSIRRRRECESC). Residues 49 to 139 (LIVVKKEGVR…VYRQFKDINV (91 aa)) enclose the ATP-cone domain.

The protein belongs to the NrdR family. Requires Zn(2+) as cofactor.

Negatively regulates transcription of bacterial ribonucleotide reductase nrd genes and operons by binding to NrdR-boxes. This is Transcriptional repressor NrdR from Bacillus subtilis (strain 168).